Here is a 205-residue protein sequence, read N- to C-terminus: GTP cyclohydrolase-2 (205 aa).

49–53 contacts GTP; the sequence is RLHSE. Positions 54, 65, and 67 each coordinate Zn(2+). GTP-binding positions include Gln-70, 92–94, and Thr-114; that span reads EGR. The Proton acceptor role is filled by Asp-126. Arg-128 (nucleophile) is an active-site residue. GTP contacts are provided by Thr-149 and Lys-154.

Belongs to the GTP cyclohydrolase II family. Zn(2+) is required as a cofactor.

The enzyme catalyses GTP + 4 H2O = 2,5-diamino-6-hydroxy-4-(5-phosphoribosylamino)-pyrimidine + formate + 2 phosphate + 3 H(+). The protein operates within cofactor biosynthesis; riboflavin biosynthesis; 5-amino-6-(D-ribitylamino)uracil from GTP: step 1/4. Functionally, catalyzes the conversion of GTP to 2,5-diamino-6-ribosylamino-4(3H)-pyrimidinone 5'-phosphate (DARP), formate and pyrophosphate. This is GTP cyclohydrolase-2 from Pseudomonas putida (strain W619).